Reading from the N-terminus, the 107-residue chain is Colipase (107 aa).

Residues 1–17 (MEKVLVLLLVALSVAYA) form the signal peptide. Positions 18–22 (APGPR) are cleaved as a propeptide — enterostatin, activation peptide. 5 cysteine pairs are disulfide-bonded: cysteine 34-cysteine 45, cysteine 40-cysteine 56, cysteine 44-cysteine 78, cysteine 66-cysteine 86, and cysteine 80-cysteine 104.

This sequence belongs to the colipase family. Forms a 1:1 stoichiometric complex with pancreatic lipase. Expressed by the pancreas.

It is found in the secreted. Functionally, colipase is a cofactor of pancreatic lipase. It allows the lipase to anchor itself to the lipid-water interface. Without colipase the enzyme is washed off by bile salts, which have an inhibitory effect on the lipase. Its function is as follows. Enterostatin has a biological activity as a satiety signal. This is Colipase (CLPS) from Oryctolagus cuniculus (Rabbit).